Reading from the N-terminus, the 406-residue chain is MAKQEVKKIVLAYSGGLDTSIILKWLKNEYGCEVITFSADLGQGDELAPIREKAFATGADKVYIDDLKEEFVRDFVYPMFRANAIYEGHYLLGTSIARPLIAKRQMEIAKIEGADAVSHGATGKGNDQVRFELGYYHFNPAITVIAPWRDWKLNSRQALVNYAKKNDIPIPVTKKRPWSSDRNLLHISFEGAILEDTWAEAPENMYVLTKAPEKAPNKPQYVEIEFKNGNAVAVDGEKMSPAQLLAHLNFIGGEHGIGRVDLLENRSVGMKSRGVYETPGGTILREAHMAVEQITMDREVMHLRDSLVPRYAEMVYNGYWFSPEREMLQALIDESQKTVNGVARVKLYKGHCRTVGRKSETDSLFNLDFATFEKDQVYNQKDAEGFIKLNSLRLRIRSLQAAAKKK.

Residues 12-20 (AYSGGLDTS) and A39 each bind ATP. L-citrulline is bound by residues Y90 and S95. G120 serves as a coordination point for ATP. Residues T122, N126, and D127 each coordinate L-aspartate. N126 is a binding site for L-citrulline. L-citrulline-binding residues include R130, S179, S188, E264, and Y276.

The protein belongs to the argininosuccinate synthase family. Type 1 subfamily. Homotetramer.

The protein localises to the cytoplasm. The enzyme catalyses L-citrulline + L-aspartate + ATP = 2-(N(omega)-L-arginino)succinate + AMP + diphosphate + H(+). It functions in the pathway amino-acid biosynthesis; L-arginine biosynthesis; L-arginine from L-ornithine and carbamoyl phosphate: step 2/3. This Geotalea daltonii (strain DSM 22248 / JCM 15807 / FRC-32) (Geobacter daltonii) protein is Argininosuccinate synthase.